A 227-amino-acid polypeptide reads, in one-letter code: MANHSQLGFQDASSPIMEELVEFHDHALMVALAICSLVLYLLTLMLTQKLSSNTVDAQEVELIWTILPAIVLVLLALPSLQILYMMDEIEEPDLTLKAIGHQWYWSYEYTDFKDLSFDSYMTPTTDLPQGHFRLLEVDHRIVIPMESPIRIIITADDVLHSWAVPTLGVKTDAIPGRLNQTSFITTRPGVFYGQCSEICGANHSYMPIVVESTPLKHFETWSSLLSS.

At 1 to 14 (MANHSQLGFQDASS) the chain is on the mitochondrial intermembrane side. The helical transmembrane segment at 15 to 45 (PIMEELVEFHDHALMVALAICSLVLYLLTLM) threads the bilayer. Over 46–58 (LTQKLSSNTVDAQ) the chain is Mitochondrial matrix. A helical membrane pass occupies residues 59-86 (EVELIWTILPAIVLVLLALPSLQILYMM). The Mitochondrial intermembrane portion of the chain corresponds to 87–227 (DEIEEPDLTL…FETWSSLLSS (141 aa)). Cu cation contacts are provided by H160, C195, E197, C199, H203, and M206. E197 contributes to the Mg(2+) binding site.

The protein belongs to the cytochrome c oxidase subunit 2 family. Component of the cytochrome c oxidase (complex IV, CIV), a multisubunit enzyme composed of 14 subunits. The complex is composed of a catalytic core of 3 subunits MT-CO1, MT-CO2 and MT-CO3, encoded in the mitochondrial DNA, and 11 supernumerary subunits COX4I, COX5A, COX5B, COX6A, COX6B, COX6C, COX7A, COX7B, COX7C, COX8 and NDUFA4, which are encoded in the nuclear genome. The complex exists as a monomer or a dimer and forms supercomplexes (SCs) in the inner mitochondrial membrane with NADH-ubiquinone oxidoreductase (complex I, CI) and ubiquinol-cytochrome c oxidoreductase (cytochrome b-c1 complex, complex III, CIII), resulting in different assemblies (supercomplex SCI(1)III(2)IV(1) and megacomplex MCI(2)III(2)IV(2)). Found in a complex with TMEM177, COA6, COX18, COX20, SCO1 and SCO2. Interacts with TMEM177 in a COX20-dependent manner. Interacts with COX20. Interacts with COX16. The cofactor is Cu cation.

It localises to the mitochondrion inner membrane. The catalysed reaction is 4 Fe(II)-[cytochrome c] + O2 + 8 H(+)(in) = 4 Fe(III)-[cytochrome c] + 2 H2O + 4 H(+)(out). Functionally, component of the cytochrome c oxidase, the last enzyme in the mitochondrial electron transport chain which drives oxidative phosphorylation. The respiratory chain contains 3 multisubunit complexes succinate dehydrogenase (complex II, CII), ubiquinol-cytochrome c oxidoreductase (cytochrome b-c1 complex, complex III, CIII) and cytochrome c oxidase (complex IV, CIV), that cooperate to transfer electrons derived from NADH and succinate to molecular oxygen, creating an electrochemical gradient over the inner membrane that drives transmembrane transport and the ATP synthase. Cytochrome c oxidase is the component of the respiratory chain that catalyzes the reduction of oxygen to water. Electrons originating from reduced cytochrome c in the intermembrane space (IMS) are transferred via the dinuclear copper A center (CU(A)) of subunit 2 and heme A of subunit 1 to the active site in subunit 1, a binuclear center (BNC) formed by heme A3 and copper B (CU(B)). The BNC reduces molecular oxygen to 2 water molecules using 4 electrons from cytochrome c in the IMS and 4 protons from the mitochondrial matrix. The sequence is that of Cytochrome c oxidase subunit 2 (MT-CO2) from Coturnix japonica (Japanese quail).